The following is a 236-amino-acid chain: Uridylate kinase (236 aa).

ATP is bound at residue 10-13; the sequence is KLSG. Gly-52 contacts UMP. 2 residues coordinate ATP: Gly-53 and Arg-57. Residues Asp-72 and 133–140 contribute to the UMP site; that span reads TGNPFFTT. Residues Thr-160, Tyr-166, and Asp-169 each coordinate ATP.

It belongs to the UMP kinase family. In terms of assembly, homohexamer.

It is found in the cytoplasm. It carries out the reaction UMP + ATP = UDP + ADP. The protein operates within pyrimidine metabolism; CTP biosynthesis via de novo pathway; UDP from UMP (UMPK route): step 1/1. Inhibited by UTP. Catalyzes the reversible phosphorylation of UMP to UDP. This Cupriavidus pinatubonensis (strain JMP 134 / LMG 1197) (Cupriavidus necator (strain JMP 134)) protein is Uridylate kinase.